The primary structure comprises 191 residues: Peptidyl-tRNA hydrolase (191 aa).

Y16 contacts tRNA. Catalysis depends on H21, which acts as the Proton acceptor. Residues F67, N69, and N115 each contribute to the tRNA site.

The protein belongs to the PTH family. In terms of assembly, monomer.

It is found in the cytoplasm. It carries out the reaction an N-acyl-L-alpha-aminoacyl-tRNA + H2O = an N-acyl-L-amino acid + a tRNA + H(+). Hydrolyzes ribosome-free peptidyl-tRNAs (with 1 or more amino acids incorporated), which drop off the ribosome during protein synthesis, or as a result of ribosome stalling. In terms of biological role, catalyzes the release of premature peptidyl moieties from peptidyl-tRNA molecules trapped in stalled 50S ribosomal subunits, and thus maintains levels of free tRNAs and 50S ribosomes. The sequence is that of Peptidyl-tRNA hydrolase from Ruthia magnifica subsp. Calyptogena magnifica.